A 333-amino-acid chain; its full sequence is Type II secretion system protein K (333 aa).

The propeptide at 1 to 7 (MRRGQNG) is leader sequence. Residues 8 to 29 (VALITVLLVVAVVTIVCAGLII) traverse the membrane as a helical segment. Over 30–333 (RQQLAIRSSA…GGDDWKKDER (304 aa)) the chain is Periplasmic. The disordered stretch occupies residues 313 to 333 (MGQGGLPIPSTGGDDWKKDER).

Belongs to the GSP K family. As to quaternary structure, type II secretion is composed of four main components: the outer membrane complex, the inner membrane complex, the cytoplasmic secretion ATPase and the periplasm-spanning pseudopilus. Interacts with the tip of the type II pseudopilus subunits XcpV, XcpU and XcpW. Interacts with core component XcpT. Cleaved by prepilin peptidase.

The protein resides in the cell inner membrane. Its function is as follows. Component of the type II secretion system required for the energy-dependent secretion of extracellular factors such as proteases and toxins from the periplasm. Plays a role in pseudopilus assembly and seems to control its length. Interacts with the pseudopilus tip complex that is critical for the recognition and binding of secretion substrates. Type II pseudopilus confers increased bacterial adhesive capabilities. The protein is Type II secretion system protein K (xcpX) of Pseudomonas aeruginosa (strain ATCC 15692 / DSM 22644 / CIP 104116 / JCM 14847 / LMG 12228 / 1C / PRS 101 / PAO1).